The sequence spans 250 residues: Acetylglutamate kinase (250 aa).

Residues 41–42 (GG), R63, and N156 contribute to the substrate site.

Belongs to the acetylglutamate kinase family. ArgB subfamily.

The protein localises to the cytoplasm. The catalysed reaction is N-acetyl-L-glutamate + ATP = N-acetyl-L-glutamyl 5-phosphate + ADP. It participates in amino-acid biosynthesis; L-arginine biosynthesis; N(2)-acetyl-L-ornithine from L-glutamate: step 2/4. In terms of biological role, catalyzes the ATP-dependent phosphorylation of N-acetyl-L-glutamate. The chain is Acetylglutamate kinase from Listeria monocytogenes serotype 4a (strain HCC23).